A 639-amino-acid polypeptide reads, in one-letter code: CTTNBP2 N-terminal-like protein (639 aa).

Residues M87–S285 adopt a coiled-coil conformation. Phosphoserine occurs at positions 284 and 285. Disordered stretches follow at residues V387–S430, R463–T490, and R511–L609. 2 stretches are compositionally biased toward low complexity: residues P405–S430 and Q467–S477. Phosphoserine is present on residues S481, S488, S523, S527, S560, S563, and S568. Over residues R511–F529 the composition is skewed to polar residues. T570 and T590 each carry phosphothreonine. Positions P587–T600 are enriched in low complexity. Position 592 is a phosphoserine (S592).

Interacts with CTTN/cortactin; this interaction may redistribute CTTN to stress fibers. May form homomers. Associates with the core of STRIPAK complexes composed of PP2A catalytic and scaffolding subunits, the striatins (PP2A regulatory subunits), the striatin-associated proteins MOB4, STRIP1 and STRIP2, PDCD10 and members of the STE20 kinases, such as STK24 and STK26.

The protein localises to the cell projection. The protein resides in the lamellipodium. It is found in the cytoplasm. Its subcellular location is the cytoskeleton. It localises to the stress fiber. Regulates lamellipodial actin dynamics in a CTTN-dependent manner. Associates with core striatin-interacting phosphatase and kinase (STRIPAK) complex to form CTTNBP2NL-STRIPAK complexes. STRIPAK complexes have critical roles in protein (de)phosphorylation and are regulators of multiple signaling pathways including Hippo, MAPK, nuclear receptor and cytoskeleton remodeling. Different types of STRIPAK complexes are involved in a variety of biological processes such as cell growth, differentiation, apoptosis, metabolism and immune regulation. The protein is CTTNBP2 N-terminal-like protein of Homo sapiens (Human).